The sequence spans 156 residues: ATP synthase subunit b (156 aa).

Residues 5–27 (ITLIGQMITFAIFVGFTMKFVWP) traverse the membrane as a helical segment.

It belongs to the ATPase B chain family. As to quaternary structure, F-type ATPases have 2 components, F(1) - the catalytic core - and F(0) - the membrane proton channel. F(1) has five subunits: alpha(3), beta(3), gamma(1), delta(1), epsilon(1). F(0) has three main subunits: a(1), b(2) and c(10-14). The alpha and beta chains form an alternating ring which encloses part of the gamma chain. F(1) is attached to F(0) by a central stalk formed by the gamma and epsilon chains, while a peripheral stalk is formed by the delta and b chains.

It localises to the cell inner membrane. F(1)F(0) ATP synthase produces ATP from ADP in the presence of a proton or sodium gradient. F-type ATPases consist of two structural domains, F(1) containing the extramembraneous catalytic core and F(0) containing the membrane proton channel, linked together by a central stalk and a peripheral stalk. During catalysis, ATP synthesis in the catalytic domain of F(1) is coupled via a rotary mechanism of the central stalk subunits to proton translocation. Functionally, component of the F(0) channel, it forms part of the peripheral stalk, linking F(1) to F(0). This is ATP synthase subunit b from Francisella tularensis subsp. tularensis (strain WY96-3418).